The sequence spans 256 residues: Venom allergen-1 (256 aa).

Positions 1 to 21 (MAFNGIALLITATIFIGSCYA) are cleaved as a signal peptide. Residues 65–211 (LNTHNKLRAE…MINYYLVCNY (147 aa)) form the SCP domain. Asparagine 146 and asparagine 210 each carry an N-linked (GlcNAc...) asparagine glycan.

The protein belongs to the CRISP family.

The protein localises to the secreted. Activates autophagy in human monocytic cells, dendritic cells and macrophages. In terms of biological role, (Microbial infection) Promotes Zika virus replication in human dendritic cells and macrophages. Facilitates Zika virus transmission from infected mosquitoes to the host in mouse model. The sequence is that of Venom allergen-1 from Aedes albopictus (Asian tiger mosquito).